The primary structure comprises 248 residues: Probable phosphatase VCM66_A0854 (248 aa).

Zn(2+)-binding residues include histidine 8, histidine 10, histidine 16, histidine 41, glutamate 74, histidine 102, histidine 132, aspartate 194, and histidine 196.

The protein belongs to the PHP family. The cofactor is Zn(2+).

The sequence is that of Probable phosphatase VCM66_A0854 from Vibrio cholerae serotype O1 (strain M66-2).